The chain runs to 181 residues: Protein csk22 (181 aa).

The next 5 helical transmembrane spans lie at 5 to 22 (LQSVYPAIIIIFFLYKKI), 35 to 57 (WLFTRIILFSLFAFGLSIFSAIH), 61 to 78 (YGYLILGILGGWLLVFFA), 91 to 113 (IYFRTHIWVEVILLTLFLSRFLY), and 140 to 162 (LTIGVCFLIAVYYIGFSSFIIKL).

It localises to the cell membrane. This Bacillus subtilis (strain 168) protein is Protein csk22 (csk22).